A 264-amino-acid chain; its full sequence is Putative hydro-lyase cgR_2449 (264 aa).

This sequence belongs to the D-glutamate cyclase family.

This chain is Putative hydro-lyase cgR_2449, found in Corynebacterium glutamicum (strain R).